The following is a 947-amino-acid chain: Pyruvate, phosphate dikinase 1, chloroplastic (947 aa).

The N-terminal 71 residues, Met1–Pro71, are a transit peptide targeting the chloroplast. The tract at residues Arg39–Cys60 is disordered. The residue at position 527 (Thr527) is a Phosphothreonine; by PDRP1. His529 functions as the Tele-phosphohistidine intermediate in the catalytic mechanism. The substrate site is built by Arg635, Arg692, Glu821, Gly842, Thr843, Asn844, and Asp845. Glu821 serves as a coordination point for Mg(2+). Position 845 (Asp845) interacts with Mg(2+). Cys907 acts as the Proton donor in catalysis.

It belongs to the PEP-utilizing enzyme family. In terms of assembly, homotetramer. The cofactor is Mg(2+). Post-translationally, phosphorylation of Thr-527 in the dark inactivates the enzyme. Dephosphorylation upon light stimulation reactivates the enzyme. Phosphorylation increases during the first 20 days post-pollination and then remains constant through the 40-day mature seed stage. Reactivation by dephosphorylation during germination is negligible. Isoform 1 is only expressed in green leaves. Isoform 2 is found in roots, stems, rachis branches, leaf sheaths, green leaves and spikelets. The non-phosphorylated PPDK in mature seeds is endosperm-localized.

It localises to the plastid. The protein resides in the chloroplast. Its subcellular location is the cytoplasm. It carries out the reaction pyruvate + phosphate + ATP = phosphoenolpyruvate + AMP + diphosphate + H(+). Activated by light-induced dephosphorylation. Inhibited by dark-induced phosphorylation. Both reactions are catalyzed by PDRP1. Functionally, formation of phosphoenolpyruvate. The cytoplasmic isoform supports the biosynthetic processes in the nascent endosperm and provides an efficient mechanism for glycolytic ATP synthesis in oxygen depleted tissues. May be involved in regulating the flux of carbon into starch and fatty acids of seeds and in the remobilization of nitrogen reserves in senescing leaves. This chain is Pyruvate, phosphate dikinase 1, chloroplastic (PPDK1), found in Oryza sativa subsp. japonica (Rice).